The chain runs to 314 residues: Methionyl-tRNA formyltransferase (314 aa).

(6S)-5,6,7,8-tetrahydrofolate is bound at residue 110 to 113 (SLLP).

Belongs to the Fmt family.

The catalysed reaction is L-methionyl-tRNA(fMet) + (6R)-10-formyltetrahydrofolate = N-formyl-L-methionyl-tRNA(fMet) + (6S)-5,6,7,8-tetrahydrofolate + H(+). In terms of biological role, attaches a formyl group to the free amino group of methionyl-tRNA(fMet). The formyl group appears to play a dual role in the initiator identity of N-formylmethionyl-tRNA by promoting its recognition by IF2 and preventing the misappropriation of this tRNA by the elongation apparatus. In Bacillus cereus (strain ATCC 14579 / DSM 31 / CCUG 7414 / JCM 2152 / NBRC 15305 / NCIMB 9373 / NCTC 2599 / NRRL B-3711), this protein is Methionyl-tRNA formyltransferase.